A 159-amino-acid polypeptide reads, in one-letter code: 2-C-methyl-D-erythritol 2,4-cyclodiphosphate synthase (159 aa).

A divalent metal cation is bound by residues aspartate 8 and histidine 10. Residues 8 to 10 (DVH) and 34 to 35 (HS) each bind 4-CDP-2-C-methyl-D-erythritol 2-phosphate. Residue histidine 42 participates in a divalent metal cation binding. 4-CDP-2-C-methyl-D-erythritol 2-phosphate is bound by residues 56 to 58 (DIG), 61 to 65 (FPDTD), 100 to 106 (AQAPKML), 132 to 135 (TTTE), phenylalanine 139, and arginine 142.

This sequence belongs to the IspF family. As to quaternary structure, homotrimer. A divalent metal cation is required as a cofactor.

It catalyses the reaction 4-CDP-2-C-methyl-D-erythritol 2-phosphate = 2-C-methyl-D-erythritol 2,4-cyclic diphosphate + CMP. Its pathway is isoprenoid biosynthesis; isopentenyl diphosphate biosynthesis via DXP pathway; isopentenyl diphosphate from 1-deoxy-D-xylulose 5-phosphate: step 4/6. In terms of biological role, involved in the biosynthesis of isopentenyl diphosphate (IPP) and dimethylallyl diphosphate (DMAPP), two major building blocks of isoprenoid compounds. Catalyzes the conversion of 4-diphosphocytidyl-2-C-methyl-D-erythritol 2-phosphate (CDP-ME2P) to 2-C-methyl-D-erythritol 2,4-cyclodiphosphate (ME-CPP) with a corresponding release of cytidine 5-monophosphate (CMP). This chain is 2-C-methyl-D-erythritol 2,4-cyclodiphosphate synthase, found in Salmonella dublin (strain CT_02021853).